A 159-amino-acid polypeptide reads, in one-letter code: Trafficking protein particle complex subunit 6A (159 aa).

At Ser-33 the chain carries Phosphoserine.

The protein belongs to the TRAPP small subunits family. BET3 subfamily. As to quaternary structure, part of the multisubunit transport protein particle (TRAPP) complex. Heterodimer with TRAPPC3. The heterodimer TRAPPC3-TRAPPC6A interacts with TRAPPC2L. Interacts with TRAPPC2L.

It localises to the golgi apparatus. The protein resides in the cis-Golgi network. It is found in the endoplasmic reticulum. Its function is as follows. May play a role in vesicular transport during the biogenesis of melanosomes. In Bos taurus (Bovine), this protein is Trafficking protein particle complex subunit 6A.